The sequence spans 49 residues: SPbeta prophage-derived uncharacterized protein YoqT (49 aa).

Residues 7–29 (CFVNWSFDKIMDYILIAGLYFVF) form a helical membrane-spanning segment.

Its subcellular location is the cell membrane. In Bacillus subtilis (strain 168), this protein is SPbeta prophage-derived uncharacterized protein YoqT (yoqT).